The following is a 476-amino-acid chain: MIRPQLRTAGLGRCLLPGLLLLLVPVLWAGAEKLHTQPSCPAVCQPTRCPALPTCALGTTPVFDLCRCCRVCPAAEREVCGGAQGQPCAPGLQCLQPLRPGFPSTCGCPTLGGAVCGSDRRTYPSMCALRAENRAARRLGKVPAVPVQWGNCGDTGTRSAGPLRRNYNFIAAVVEKVAPSVVHVQLWGRLLHGSRLVPVYSGSGFIVSEDGLIITNAHVVRNQQWIEVVLQNGARYEAVVKDIDLKLDLAVIKIESNAELPVLMLGRSSDLRAGEFVVALGSPFSLQNTATAGIVSTKQRGGKELGMKDSDMDYVQIDATINYGNSGGPLVNLDGDVIGVNSLRVTDGISFAIPSDRVRQFLAEYHEHQMKGKAFSNKKYLGLQMLSLTVPLSEELKMHYPDFPDVSSGVYVCKVVEGTAAQSSGLRDHDVIVNINGKPITTTTDVVKALDSDSLSMAVLRGKDNLLLTVIPETIN.

Residues Met-1–Ala-31 form the signal peptide. In terms of domain architecture, IGFBP N-terminal spans Thr-36–Pro-109. Disulfide bonds link Cys-40–Cys-66, Cys-44–Cys-68, Cys-49–Cys-69, Cys-55–Cys-72, Cys-80–Cys-94, Cys-88–Cys-106, Cys-108–Cys-127, and Cys-116–Cys-152. Residues Cys-88 to Asp-154 form the Kazal-like domain. Residues Gly-202 to Leu-362 are serine protease. Catalysis depends on charge relay system residues His-218, Asp-248, and Ser-326. The PDZ domain occupies Leu-383–Thr-474.

This sequence belongs to the peptidase S1C family.

The protein localises to the secreted. Functionally, serine protease. The sequence is that of Serine protease HTRA4 (HTRA4) from Homo sapiens (Human).